Consider the following 400-residue polypeptide: Deoxyguanosinetriphosphate triphosphohydrolase-like protein (400 aa).

The 129-residue stretch at 76-204 (RLTHTLEVAQ…VNIADPLAYC (129 aa)) folds into the HD domain.

This sequence belongs to the dGTPase family. Type 2 subfamily.

The polypeptide is Deoxyguanosinetriphosphate triphosphohydrolase-like protein (Syntrophus aciditrophicus (strain SB)).